Consider the following 122-residue polypeptide: Phospholipase A2 crotoxin basic subunit CBb (122 aa).

7 disulfides stabilise this stretch: C26–C115, C28–C44, C43–C95, C49–C122, C50–C88, C57–C81, and C75–C86. 3 residues coordinate Ca(2+): Y27, G29, and G31. H47 is an active-site residue. D48 contacts Ca(2+). D89 is a catalytic residue.

The protein belongs to the phospholipase A2 family. Group II subfamily. D49 sub-subfamily. In terms of assembly, heterodimer of one of the acidic (CA1, CA2, CA3 or CA4) and one of the basic (CBa1, CBa2, CBb, CBc or CBd) subunits; non-covalently linked. The acidic subunit is non-toxic, without enzymatic activity and comprises 3 peptides that are cross-linked by 5 disulfide bridges. The basic subunit is toxic, has phospholipase A2 activity and is composed of a single chain. Multiple variants of each subunit give different crotoxin complexes that can be subdivided into 2 classes: (1) those of high toxicity, low PLA2 activity (CBb, CBc and CBd linked with high affinity to any CA) and high stability (K(d)=4.5 nM) and (2) those of moderate toxicity, high PLA2 activity (CBa2 linked with low affinity to any CA) and low stability (K(d)=25 nM). It depends on Ca(2+) as a cofactor. In terms of tissue distribution, expressed by the venom gland.

It is found in the secreted. The catalysed reaction is a 1,2-diacyl-sn-glycero-3-phosphocholine + H2O = a 1-acyl-sn-glycero-3-phosphocholine + a fatty acid + H(+). Functionally, heterodimer CA-CB: Crotoxin is a potent presynaptic neurotoxin that possesses phospholipase A2 (PLA2) activity and exerts a lethal action by blocking neuromuscular transmission. It consists of a non-covalent association of a basic and weakly toxic PLA2 subunit (CBa2, CBb, CBc, or CBd), with a small acidic, non-enzymatic and non-toxic subunit (CA1, CA2, CA3 or CA4). The complex acts by binding to a specific 48-kDa protein (R48) receptor located on presynaptic membranes, forming a transient ternary complex CA-CB-R48, followed by dissociation of the CA-CB complex and release of the CA subunit. At equilibrium, only the CB subunits remain associated with the specific crotoxin receptor. In addition to neurotoxicity, crotoxin has been found to exert myotoxicity, nephrotoxicity, and cardiovascular toxicity. Moreover, anti-inflammatory, immunomodulatory, anti-tumor and analgesic effects of crotoxin have also been reported. Its function is as follows. Monomer CBb: The basic subunit of crotoxin is a snake venom phospholipase A2 (PLA2) that exhibits weak neurotoxicity (10-fold less than the heterodimer) and strong anticoagulant effects by binding to factor Xa (F10) and inhibiting the prothrombinase activity. In addition, it shows the same effects described for the heterodimer and binds the nucleotide-binding domain (NBD1) of CFTR chloride channels and increases the channel current. PLA2 catalyzes the calcium-dependent hydrolysis of the 2-acyl groups in 3-sn-phosphoglycerides. The protein is Phospholipase A2 crotoxin basic subunit CBb of Crotalus durissus terrificus (South American rattlesnake).